We begin with the raw amino-acid sequence, 230 residues long: 7-cyano-7-deazaguanine synthase (230 aa).

9–19 (YSGGLDSTTCL) contacts ATP. Zn(2+)-binding residues include Cys190, Cys200, Cys203, and Cys206.

The protein belongs to the QueC family. The cofactor is Zn(2+).

The catalysed reaction is 7-carboxy-7-deazaguanine + NH4(+) + ATP = 7-cyano-7-deazaguanine + ADP + phosphate + H2O + H(+). It functions in the pathway purine metabolism; 7-cyano-7-deazaguanine biosynthesis. Catalyzes the ATP-dependent conversion of 7-carboxy-7-deazaguanine (CDG) to 7-cyano-7-deazaguanine (preQ(0)). This is 7-cyano-7-deazaguanine synthase from Syntrophotalea carbinolica (strain DSM 2380 / NBRC 103641 / GraBd1) (Pelobacter carbinolicus).